The sequence spans 420 residues: MRYDVVIIGGGLAGLTCGIRLAEQGKRCAIVSAGQNALHFSSGALDLLSHLPDGQPVSQPLDALDELARQAPHHPYSRMGAAAVAALLPQVEALLERSNISLLGNHQQNHWRMTPLGKFRACWLSPADGVTRGLADSHFGDNPLIAGIEGFLDFQSRIVAGTLQTQGIAARSDELKLPVLDRLRQNPSEFRAVNIARLLDRPENRSALVEELSLLANGNDAIIMPACLGLDSPEIVSELADALGKPVLLLPTLPPSVLGLRLHQALSQRFRQLGGMVMPGDRAVRASLSSQEIAVHSHHHRDIPLRAKHAVLASGSFFSNGLVTQFDRVTEPVFGLDVRFAEQREGWSQQDVFAPQPYMQFGAIVDEHLHPRIAGETVNNLYAIGAVLEGFDPIVQGCGAGVSLLSALHVAEQILKEGNP.

It belongs to the anaerobic G-3-P dehydrogenase subunit B family. Composed of a catalytic GlpA/B dimer and of membrane bound GlpC. FMN is required as a cofactor.

The catalysed reaction is a quinone + sn-glycerol 3-phosphate = dihydroxyacetone phosphate + a quinol. Its pathway is polyol metabolism; glycerol degradation via glycerol kinase pathway; glycerone phosphate from sn-glycerol 3-phosphate (anaerobic route): step 1/1. Conversion of glycerol 3-phosphate to dihydroxyacetone. Uses fumarate or nitrate as electron acceptor. The protein is Anaerobic glycerol-3-phosphate dehydrogenase subunit B of Pectobacterium atrosepticum (strain SCRI 1043 / ATCC BAA-672) (Erwinia carotovora subsp. atroseptica).